Consider the following 652-residue polypeptide: Large subunit GTPase 1 homolog (652 aa).

Position 93 is a phosphoserine (Ser-93). In terms of domain architecture, CP-type G spans 164-438; it reads WRQLWRVIER…LCDCPGLVMP (275 aa). Residue 212-215 participates in GTP binding; that stretch reads NKAD. Ser-252 carries the post-translational modification Phosphoserine. Residues 288 to 347 are disordered; sequence LGEAASSEEDESEYEDCQEEEEDWQTCLEDSSSSDEEACGQDCKEGHTVDSEAQGRNTPQ. The segment covering 293-311 has biased composition (acidic residues); that stretch reads SSEEDESEYEDCQEEEEDW. GTP-binding positions include 387 to 394 and 431 to 434; these read GYPNVGKS and DCPG. Residues 625–652 are disordered; it reads RGAGKPWKKHGNRNKKEKSRRLYKHLDM. Positions 630–652 are enriched in basic residues; sequence PWKKHGNRNKKEKSRRLYKHLDM.

It belongs to the TRAFAC class YlqF/YawG GTPase family. LSG1 subfamily.

Its subcellular location is the cytoplasm. It is found in the endoplasmic reticulum. The protein localises to the nucleus. The protein resides in the cajal body. The enzyme catalyses GTP + H2O = GDP + phosphate + H(+). Its function is as follows. Functions as a GTPase. May act by mediating the release of NMD3 from the 60S ribosomal subunit after export into the cytoplasm during the 60S ribosomal subunit maturation. The chain is Large subunit GTPase 1 homolog from Bos taurus (Bovine).